The chain runs to 213 residues: High frequency lysogenization protein HflD homolog (213 aa).

It belongs to the HflD family.

Its subcellular location is the cytoplasm. The protein localises to the cell inner membrane. The polypeptide is High frequency lysogenization protein HflD homolog (Klebsiella pneumoniae (strain 342)).